Reading from the N-terminus, the 102-residue chain is UPF0213 protein in potE 3'region (102 aa).

One can recognise a GIY-YIG domain in the interval 6–81 (SPWHLYMLRL…KQLSKTQKER (76 aa)).

This sequence belongs to the UPF0213 family.

This is UPF0213 protein in potE 3'region from Serratia liquefaciens.